The chain runs to 514 residues: F-box-like/WD repeat-containing protein TBL1XR1 (514 aa).

Ser2 carries the N-acetylserine modification. The LisH domain occupies Ser4 to Gln36. The F-box-like domain occupies Gly41–Ala86. Residue Lys102 is modified to N6-acetyllysine. Ser119 carries the phosphoserine modification. Over residues Gln120 to Glu135 the composition is skewed to low complexity. The interval Gln120–His139 is disordered. 8 WD repeats span residues Gly167–Ser206, Pro223–Leu262, Gln264–Gln303, Phe306–Thr344, Gly347–Asp386, Ala389–Thr437, Lys440–Ser479, and Arg481–Arg513. Lys277 participates in a covalent cross-link: Glycyl lysine isopeptide (Lys-Gly) (interchain with G-Cter in SUMO2).

It belongs to the WD repeat EBI family. Component of the N-Cor repressor complex, at least composed of NCOR1, NCOR2, HDAC3, TBL1X, TBL1XR1, CORO2A and GPS2. Probable component of some E3 ubiquitin ligase complex. Interacts with histones H2B and H4. Interacts with MECP2; bridges interaction between MECP2 and NCOR1. Interacts with USP44. In terms of tissue distribution, widely expressed including the pituitary, hypothalamus, white and brown adipose tissue, muscle and liver.

It is found in the nucleus. In terms of biological role, F-box-like protein involved in the recruitment of the ubiquitin/19S proteasome complex to nuclear receptor-regulated transcription units. Plays an essential role in transcription activation mediated by nuclear receptors. Probably acts as integral component of the N-Cor corepressor complex that mediates the recruitment of the 19S proteasome complex, leading to the subsequent proteasomal degradation of N-Cor complex, thereby allowing cofactor exchange, and transcription activation. This is F-box-like/WD repeat-containing protein TBL1XR1 (TBL1XR1) from Homo sapiens (Human).